The sequence spans 164 residues: UPF0304 protein YfbU (164 aa).

The protein belongs to the UPF0304 family.

The chain is UPF0304 protein YfbU from Shigella flexneri serotype 5b (strain 8401).